Consider the following 1136-residue polypeptide: Nitric oxide synthase, inducible (1136 aa).

Residues Cys-107 and Cys-112 each coordinate Zn(2+). Heme b is bound at residue Cys-197. Residues Gln-260, Trp-369, Tyr-370, and Glu-374 each coordinate L-arginine. The (6R)-L-erythro-5,6,7,8-tetrahydrobiopterin site is built by Arg-378, Val-459, Trp-460, and Phe-473. Tyr-488 is a heme b binding site. The interval 512 to 532 (LSILAKAVLLASLLLQKTMAA) is calmodulin-binding. Residues 536–674 (VTVIYATETG…AFRTWAVTAF (139 aa)) enclose the Flavodoxin-like domain. FMN contacts are provided by Thr-542, Glu-543, Thr-544, Lys-546, Ser-547, Ser-588, Thr-589, Ser-625, Cys-632, Glu-658, and Gln-662. The FAD-binding FR-type domain maps to 727 to 967 (KNVIPMKLKF…VRSADGFRLP (241 aa)). Arg-747 serves as a coordination point for NADP(+). 10 residues coordinate FAD: His-769, Arg-903, Tyr-905, Ser-906, Thr-921, Ala-923, Tyr-927, Val-940, Cys-941, and Ser-942. The NADP(+) site is built by Thr-981, Arg-1014, Ser-1043, Arg-1044, Lys-1050, Tyr-1052, Gln-1054, and Asp-1087.

This sequence belongs to the NOS family. Homodimer. Requires heme b as cofactor. FAD serves as cofactor. FMN is required as a cofactor. It depends on (6R)-L-erythro-5,6,7,8-tetrahydrobiopterin as a cofactor.

The protein localises to the cytoplasm. It localises to the cytosol. The enzyme catalyses 2 L-arginine + 3 NADPH + 4 O2 + H(+) = 2 L-citrulline + 2 nitric oxide + 3 NADP(+) + 4 H2O. Not stimulated by calcium/calmodulin. Produces nitric oxide (NO) which is a messenger molecule with diverse functions throughout the body. NO may serve as both a paracrine and autocrine signal for modulating osteoclast bone resorption. Also has nitrosylase activity and mediates cysteine S-nitrosylation of cytoplasmic target proteins such COX2. This Gallus gallus (Chicken) protein is Nitric oxide synthase, inducible (NOS2).